Consider the following 405-residue polypeptide: Imidazolonepropionase (405 aa).

Residues histidine 70 and histidine 72 each coordinate Fe(3+). 2 residues coordinate Zn(2+): histidine 70 and histidine 72. The 4-imidazolone-5-propanoate site is built by arginine 79, tyrosine 142, and histidine 175. Tyrosine 142 contributes to the N-formimidoyl-L-glutamate binding site. Fe(3+) is bound at residue histidine 240. Histidine 240 is a Zn(2+) binding site. Glutamine 243 contributes to the 4-imidazolone-5-propanoate binding site. Residue aspartate 315 participates in Fe(3+) binding. Aspartate 315 contacts Zn(2+). Positions 317 and 319 each coordinate N-formimidoyl-L-glutamate. Serine 320 contributes to the 4-imidazolone-5-propanoate binding site.

The protein belongs to the metallo-dependent hydrolases superfamily. HutI family. It depends on Zn(2+) as a cofactor. The cofactor is Fe(3+).

The protein resides in the cytoplasm. The catalysed reaction is 4-imidazolone-5-propanoate + H2O = N-formimidoyl-L-glutamate. Its pathway is amino-acid degradation; L-histidine degradation into L-glutamate; N-formimidoyl-L-glutamate from L-histidine: step 3/3. Functionally, catalyzes the hydrolytic cleavage of the carbon-nitrogen bond in imidazolone-5-propanoate to yield N-formimidoyl-L-glutamate. It is the third step in the universal histidine degradation pathway. The sequence is that of Imidazolonepropionase from Ruegeria sp. (strain TM1040) (Silicibacter sp.).